Consider the following 312-residue polypeptide: Glyoxylate/hydroxypyruvate reductase A (312 aa).

Arg-227 is a catalytic residue. His-275 acts as the Proton donor in catalysis.

The protein belongs to the D-isomer specific 2-hydroxyacid dehydrogenase family. GhrA subfamily.

The protein resides in the cytoplasm. The catalysed reaction is glycolate + NADP(+) = glyoxylate + NADPH + H(+). The enzyme catalyses (R)-glycerate + NAD(+) = 3-hydroxypyruvate + NADH + H(+). It catalyses the reaction (R)-glycerate + NADP(+) = 3-hydroxypyruvate + NADPH + H(+). In terms of biological role, catalyzes the NADPH-dependent reduction of glyoxylate and hydroxypyruvate into glycolate and glycerate, respectively. This is Glyoxylate/hydroxypyruvate reductase A from Escherichia coli O127:H6 (strain E2348/69 / EPEC).